Consider the following 210-residue polypeptide: Pre-mRNA-splicing factor 38 (210 aa).

The segment at 181–210 (PLSSSSDEEDDDEEQISKLESNEGAVDRNI) is disordered. Over residues 195-210 (QISKLESNEGAVDRNI) the composition is skewed to basic and acidic residues.

The protein belongs to the PRP38 family. Component of the 25S U4/U6.U5 tri-snRNP particle, a subcomplex of the spliceosome.

Its subcellular location is the nucleus. Its function is as follows. Required for pre-mRNA splicing and maintenance of stable U6 small nuclear RNA levels. Implicated in the formation of stable and biologically active snRNP structures. As part of the U4/U6.U5 tri-snRNP particle, dispensible for spliceosome assembly, but required for conformational changes, which result in U4 snRNA release and the subsequent catalytic activation of the spliceosome. This Schizosaccharomyces pombe (strain 972 / ATCC 24843) (Fission yeast) protein is Pre-mRNA-splicing factor 38.